A 54-amino-acid polypeptide reads, in one-letter code: uncharacterized protein (54 aa).

Residues 32–52 traverse the membrane as a helical segment; it reads LFSLLVLIILCFIDPILFYFI.

Its subcellular location is the host membrane. This is an uncharacterized protein from Cassava vein mosaic virus (CsVMV).